A 77-amino-acid chain; its full sequence is Large ribosomal subunit protein bL28 (77 aa).

This sequence belongs to the bacterial ribosomal protein bL28 family.

The polypeptide is Large ribosomal subunit protein bL28 (Polynucleobacter asymbioticus (strain DSM 18221 / CIP 109841 / QLW-P1DMWA-1) (Polynucleobacter necessarius subsp. asymbioticus)).